Reading from the N-terminus, the 1233-residue chain is uncharacterized protein (1233 aa).

7 disordered regions span residues 1 to 39 (MVES…PSTN), 65 to 116 (QELS…DAIS), 160 to 211 (AEGT…TDLS), 250 to 577 (EKMD…DAPR), 594 to 825 (DLEV…NSEK), 851 to 872 (NKEN…NSEK), and 902 to 955 (EDVE…ENSK). Residues 72 to 83 (KSSKLKGHKKKN) show a composition bias toward basic residues. Ser180 is subject to Phosphoserine. The segment covering 183–199 (TRRKKNKKKKTTNRRGR) has biased composition (basic residues). The segment covering 201–211 (SSNPADTTDLS) has biased composition (polar residues). Basic and acidic residues-rich tracts occupy residues 250–280 (EKMD…ETSS) and 287–300 (NEEK…REEN). Residues 329–345 (GQASTKDVESESLTKNG) are compositionally biased toward polar residues. 2 stretches are compositionally biased toward basic and acidic residues: residues 349–370 (KENE…DRDG) and 379–408 (NQKE…ELSV). Over residues 409 to 422 (NHENNMSHNFNAAG) the composition is skewed to polar residues. Position 462 is a phosphoserine (Ser462). Residues 466–478 (EKEEEEEEEEEEN) are compositionally biased toward acidic residues. Composition is skewed to basic and acidic residues over residues 484-497 (VKKE…EAVR), 508-527 (STSK…EAGE), 594-622 (DLEV…DKIA), 631-672 (EDMK…KTPE), and 684-711 (RPED…DVKP). Ser523 is modified (phosphoserine). The segment covering 728 to 739 (QRVQISTEQAET) has biased composition (polar residues). Positions 753–783 (FKEEEKPKRFEITQEGDKITGKDTNHEHGEA) are enriched in basic and acidic residues. Residues 855 to 868 (EDVEVDTEEDAEVE) are compositionally biased toward acidic residues. Thr861 carries the phosphothreonine modification. Composition is skewed to basic and acidic residues over residues 910–920 (SKEDIETKCSE) and 935–948 (EVSK…TKED). Phosphoserine is present on Ser975. 2 disordered regions span residues 984 to 1071 (LPEL…PKKA) and 1109 to 1128 (KDST…KPQD). Residues 986-999 (ELEKQDIKDNKGED) show a composition bias toward basic and acidic residues. Phosphoserine is present on residues Ser1037 and Ser1046. Basic and acidic residues-rich tracts occupy residues 1062–1071 (QSTRENPKKA) and 1118–1127 (QSKKNNDKPQ). The Glutaredoxin domain maps to 1132 to 1233 (TSEIRKLNEK…KLRELIYDTI (102 aa)).

This is an uncharacterized protein from Saccharomyces cerevisiae (strain ATCC 204508 / S288c) (Baker's yeast).